The primary structure comprises 435 residues: Serine--tRNA ligase (435 aa).

Residue 241 to 243 (TAE) participates in L-serine binding. 272 to 274 (RAE) provides a ligand contact to ATP. Residue glutamate 295 coordinates L-serine. 359–362 (EISS) lines the ATP pocket. Serine 395 contributes to the L-serine binding site.

This sequence belongs to the class-II aminoacyl-tRNA synthetase family. Type-1 seryl-tRNA synthetase subfamily. Homodimer. The tRNA molecule binds across the dimer.

The protein resides in the cytoplasm. It catalyses the reaction tRNA(Ser) + L-serine + ATP = L-seryl-tRNA(Ser) + AMP + diphosphate + H(+). The enzyme catalyses tRNA(Sec) + L-serine + ATP = L-seryl-tRNA(Sec) + AMP + diphosphate + H(+). It participates in aminoacyl-tRNA biosynthesis; selenocysteinyl-tRNA(Sec) biosynthesis; L-seryl-tRNA(Sec) from L-serine and tRNA(Sec): step 1/1. Its function is as follows. Catalyzes the attachment of serine to tRNA(Ser). Is also able to aminoacylate tRNA(Sec) with serine, to form the misacylated tRNA L-seryl-tRNA(Sec), which will be further converted into selenocysteinyl-tRNA(Sec). This Haemophilus ducreyi (strain 35000HP / ATCC 700724) protein is Serine--tRNA ligase.